A 469-amino-acid polypeptide reads, in one-letter code: 3-isopropylmalate dehydratase large subunit (469 aa).

[4Fe-4S] cluster is bound by residues Cys-347, Cys-407, and Cys-410.

The protein belongs to the aconitase/IPM isomerase family. LeuC type 1 subfamily. As to quaternary structure, heterodimer of LeuC and LeuD. The cofactor is [4Fe-4S] cluster.

The enzyme catalyses (2R,3S)-3-isopropylmalate = (2S)-2-isopropylmalate. It participates in amino-acid biosynthesis; L-leucine biosynthesis; L-leucine from 3-methyl-2-oxobutanoate: step 2/4. In terms of biological role, catalyzes the isomerization between 2-isopropylmalate and 3-isopropylmalate, via the formation of 2-isopropylmaleate. The sequence is that of 3-isopropylmalate dehydratase large subunit from Prochlorococcus marinus (strain MIT 9515).